We begin with the raw amino-acid sequence, 662 residues long: DNA ligase (662 aa).

NAD(+) is bound by residues 34-38 (DYDYD), 83-84 (SI), and Glu113. Lys115 acts as the N6-AMP-lysine intermediate in catalysis. The NAD(+) site is built by Arg136, Glu172, Lys286, and Lys310. 4 residues coordinate Zn(2+): Cys404, Cys407, Cys422, and Cys427. Residues 583-662 (RESSSCLGKT…NDLLKILYPN (80 aa)) form the BRCT domain.

The protein belongs to the NAD-dependent DNA ligase family. LigA subfamily. The cofactor is Mg(2+). It depends on Mn(2+) as a cofactor.

The catalysed reaction is NAD(+) + (deoxyribonucleotide)n-3'-hydroxyl + 5'-phospho-(deoxyribonucleotide)m = (deoxyribonucleotide)n+m + AMP + beta-nicotinamide D-nucleotide.. DNA ligase that catalyzes the formation of phosphodiester linkages between 5'-phosphoryl and 3'-hydroxyl groups in double-stranded DNA using NAD as a coenzyme and as the energy source for the reaction. It is essential for DNA replication and repair of damaged DNA. The polypeptide is DNA ligase (Chlamydia caviae (strain ATCC VR-813 / DSM 19441 / 03DC25 / GPIC) (Chlamydophila caviae)).